Reading from the N-terminus, the 423-residue chain is Endoplasmic reticulum junction formation protein lunapark (423 aa).

Over 1–45 (MGALLAKWRAKPSTVEVLEKMEKDIQSLEEFRDKNQKLRKIWVAR) the chain is Cytoplasmic. Residues 16–40 (EVLEKMEKDIQSLEEFRDKNQKLRK) adopt a coiled-coil conformation. Residues 46-66 (LFFYSTILYILTSLTVYLWYL) traverse the membrane as a helical segment. Over 67–77 (PDGMTARLLTM) the chain is Lumenal. A helical membrane pass occupies residues 78–98 (LLFLSFPVLIWFVRTLLILWF). Topologically, residues 99–423 (SRRTERNNDA…ETEESFMETE (325 aa)) are cytoplasmic. Residues 101-128 (RTERNNDALELLKTEKKKILEEVMEKET) are a coiled coil. The disordered stretch occupies residues 147–169 (KELELPVPGPPITPRPGQDLRQR). A Phosphothreonine modification is found at Thr-159. Residues Ser-177, Ser-179, and Ser-188 each carry the phosphoserine modification. At Thr-198 the chain carries Phosphothreonine. Positions 200–247 (SLQRDTSAPGGPPERSVQPTPQSNILQRRPGSPATTVSGMAIHPPGPP) are disordered. A phosphoserine mark is found at Ser-206 and Ser-215. The segment covering 216-225 (VQPTPQSNIL) has biased composition (polar residues). Thr-219 is modified (phosphothreonine). 2 positions are modified to phosphoserine: Ser-222 and Ser-231. The segment at 280–305 (CQQCFSHNGMALKEEFEYVAFRCAYC) adopts a C4-type; plays a role in ER morphology zinc-finger fold. Residues 318-423 (APRLQEINFD…ETEESFMETE (106 aa)) form a disordered region. The segment covering 334–343 (DSQGSVSSVQ) has biased composition (polar residues). Acidic residues-rich tracts occupy residues 370 to 391 (QAIEEDSTCSEQQWEEAPDDSE) and 414 to 423 (ETEESFMETE).

The protein belongs to the lunapark family. Homodimer; homodimerization requires the C4-type zinc finger motif and decreases during mitosis in a phosphorylation-dependent manner. Phosphorylated. Phosphorylation at Thr-159 occurs during interphase. Phosphorylation at Ser-177, Ser-179, Ser-188, Thr-198, Ser-206, Ser-215, Thr-219, Ser-222 and Ser-231 occurs during mitosis; these phosphorylations reduce both its homodimerization and the ER three-way tubular junction formation.

Its subcellular location is the endoplasmic reticulum membrane. Endoplasmic reticulum (ER)-shaping membrane protein that plays a role in determining ER morphology. Involved in the stabilization of nascent three-way ER tubular junctions within the ER network. May also play a role as a curvature-stabilizing protein within three-way ER tubular junction network. The chain is Endoplasmic reticulum junction formation protein lunapark (lnpk) from Xenopus tropicalis (Western clawed frog).